The primary structure comprises 165 residues: MYIEMIDETGQVSQEIMEQTLDLLNFAAQKTGKEEKEMSVTFVTNERSHELNLEYRDTDRPTDVISLEYKPETPILFSQEDLAADPSLAEMMAEFDAYIGELFISIDKAREQSQEYGHSFEREMGFLAVHGFLHINGYDHYTLEEEKEMFTLQEEILTAYGLTRQ.

Histidine 130, histidine 134, and histidine 140 together coordinate Zn(2+).

Belongs to the endoribonuclease YbeY family. The cofactor is Zn(2+).

The protein localises to the cytoplasm. In terms of biological role, single strand-specific metallo-endoribonuclease involved in late-stage 70S ribosome quality control and in maturation of the 3' terminus of the 16S rRNA. The polypeptide is Endoribonuclease YbeY (Streptococcus pyogenes serotype M1).